The chain runs to 445 residues: DDB1- and CUL4-associated factor 13 (445 aa).

Lys49 carries the post-translational modification N6-acetyllysine. 7 WD repeats span residues 64–104, 107–146, 149–191, 194–234, 236–276, 280–319, and 323–362; these read GHRD…CIRT, AHEGFVRGICTRFCGTSFFTVGDDKTVKQWKMDGPGYGDE, PLHT…PICS, WGFD…PLKK, ILDM…TPVM, DHVSAVLDVDYSPTGKEFVSASFDKSIRIFPVDKSRSREV, and KRMQHVICVKWTSDSKYIMCGSDEMNIRLWKANASEKLGV. Residues 353-441 form a required for nucleolar location region; that stretch reads KANASEKLGV…LVSEKKKHVV (89 aa).

The protein belongs to the WD repeat DCAF13/WDSOF1 family. As to quaternary structure, part of the small subunit (SSU) processome, composed of more than 70 proteins and the RNA chaperone small nucleolar RNA (snoRNA) U3. Component of the DCX(DCAF13) E3 ubiquitin ligase complex, at least composed of CUL4 (CUL4A or CUL4B), DDB1, DCAF13 and RBX1. Interacts (via WD40 domain) with DDB1. Interacts with ESR1 and LATS1. As to expression, expressed in the endometrium during decidualization. Expression is down-regulated in preeclampsia decidual tissues.

Its subcellular location is the nucleus. It localises to the nucleolus. The protein operates within protein modification; protein ubiquitination. Part of the small subunit (SSU) processome, first precursor of the small eukaryotic ribosomal subunit. During the assembly of the SSU processome in the nucleolus, many ribosome biogenesis factors, an RNA chaperone and ribosomal proteins associate with the nascent pre-rRNA and work in concert to generate RNA folding, modifications, rearrangements and cleavage as well as targeted degradation of pre-ribosomal RNA by the RNA exosome. Participates in the 18S rRNA processing in growing oocytes, being essential for oocyte nonsurrounded nucleolus (NSN) to surrounded nucleolus (SN) transition. Its function is as follows. Substrate-recognition component of a DCX (DDB1-CUL4-X-box) E3 ubiquitin-protein ligase complex that plays a key role in embryo preimplantation and is required for normal meiotic cycle progression in oocytes. Acts as a maternal factor that regulates oocyte and zygotic chromatin tightness during maternal to zygotic transition. Also involved in the transformation of the endometrium into the decidua, known as decidualization, providing a solid foundation for implantation of blastocysts. Recognizes the histone methyltransferases SUV39H1 and SUV39H2 and directs them to polyubiquitination and proteasomal degradation, which facilitates the H3K9me3 removal and early zygotic gene expression, essential steps for progressive genome reprogramming and the establishment of pluripotency during preimplantation embryonic development. Supports the spindle assembly and chromosome condensation during oocyte meiotic division by targeting the polyubiquitination and degradation of PTEN, a lipid phosphatase that inhibits PI3K pathway as well as oocyte growth and maturation. Targets PMP22 for polyubiquitination and proteasomal degradation. This chain is DDB1- and CUL4-associated factor 13, found in Homo sapiens (Human).